Consider the following 166-residue polypeptide: MTKKKNKKVTKSERGEANRRLAENRLARHQYEILETLETGIELVGTEVKSIRAGNTNLRDGFCLIREGELQLHNVHISPLNNAGNFFNHDPLRTRKLLAHRKEINKLEIQVARKGLTLIPLSIHLKGSWIKIIIGVGKGRKLHDKREDDKRKQANRDMKSALARYR.

Positions 143–166 (HDKREDDKRKQANRDMKSALARYR) are disordered. Residues 144-159 (DKREDDKRKQANRDMK) show a composition bias toward basic and acidic residues.

Belongs to the SmpB family.

The protein resides in the cytoplasm. Required for rescue of stalled ribosomes mediated by trans-translation. Binds to transfer-messenger RNA (tmRNA), required for stable association of tmRNA with ribosomes. tmRNA and SmpB together mimic tRNA shape, replacing the anticodon stem-loop with SmpB. tmRNA is encoded by the ssrA gene; the 2 termini fold to resemble tRNA(Ala) and it encodes a 'tag peptide', a short internal open reading frame. During trans-translation Ala-aminoacylated tmRNA acts like a tRNA, entering the A-site of stalled ribosomes, displacing the stalled mRNA. The ribosome then switches to translate the ORF on the tmRNA; the nascent peptide is terminated with the 'tag peptide' encoded by the tmRNA and targeted for degradation. The ribosome is freed to recommence translation, which seems to be the essential function of trans-translation. The polypeptide is SsrA-binding protein (Prochlorococcus marinus (strain MIT 9211)).